We begin with the raw amino-acid sequence, 748 residues long: MAEAVERTDELVREYLLFRGFTHTLRQLDAEIKADKEKGFRVDKIVDQLQQLMQVYDLAALRDYWSYLERRLFSRLEDIYRPTINKLKTSLFRFYLVYTIQTNRNDKAQEFFAKQATELQNQAEWKDWFVLPFLPSPDTNPTFATYFSRQWADTFIISLHNFLSVLFQCMPVPVILNFDAECQRTNQVQEENEVLRQKLFALQAEIHRLKKEEQQQEEEAAALVQHKLPPYVSSMDRLGDSELALVCSQRPASLSQSPRVGFLSSLLPQSKKSPSRLSPAQGPPQAQSSAKKDSFSSQATKGKDSVPGAKDGKSLLSGPVPGEASWTHQRQRRLQDHGKERRELLSTSSSQSQCAERKPEVSGAEAEPCLELHMGPVEVLARVSTAGSEGDRPEQPFIVLSQEEYGEHHSSIMHCRVDCSGRRVASLDVDGVIKVWSFNPIMQTKASSISKSPLLSLEWATKRDRLLLLGSGVGTVRLYDTEAKKNLCEININDDMPRILSLACSPNGASFVCSAAAPSLTSQTDSSAPDIGSKGMNQVPGKLLLWDTKTMKQQLQFSLDPEPIAINCTAFNHNGNLLVTGAADGVIRLFDMQQHECAMSWKAHCGEVYSVEFSCDENAVYSIGEDRKFIQWNIHKSGLKVSESNLPSDATGPFVLSGYSGYKQVQVPRGRLFAFDSEGNYMLTCSATGGLIYKLGSEEKVLENCLSLGGHRAPVVTVDWSTAMDCGTCLTASMDGKIKLTTLLAHKL.

The stretch at 183 to 228 (QRTNQVQEENEVLRQKLFALQAEIHRLKKEEQQQEEEAAALVQHKL) forms a coiled coil. Ser-257 carries the post-translational modification Phosphoserine. The segment covering 266 to 279 (LLPQSKKSPSRLSP) has biased composition (low complexity). A disordered region spans residues 266 to 368 (LLPQSKKSPS…PEVSGAEAEP (103 aa)). A compositionally biased stretch (polar residues) spans 284-300 (PQAQSSAKKDSFSSQAT). Phosphoserine occurs at positions 289 and 294. The segment covering 333 to 344 (RLQDHGKERREL) has biased composition (basic and acidic residues). A compositionally biased stretch (polar residues) spans 345–354 (LSTSSSQSQC). WD repeat units follow at residues 407 to 446 (EHHSSIMHCRVDCSGRRVASLDVDGVIKVWSFNPIMQTKA), 449 to 489 (ISKS…NLCE), 512 to 556 (VCSA…QQLQ), 561 to 600 (PEPIAINCTAFNHNGNLLVTGAADGVIRLFDMQQHECAMS), 603 to 642 (AHCGEVYSVEFSCDENAVYSIGEDRKFIQWNIHKSGLKVS), 665 to 703 (VQVPRGRLFAFDSEGNYMLTCSATGGLIYKLGSEEKVLE), and 710 to 748 (GHRAPVVTVDWSTAMDCGTCLTASMDGKIKLTTLLAHKL).

The protein belongs to the WD repeat WDR91 family. Interacts with WDR81; involved in early to late endosome cargo transport. Interacts with BECN1; negatively regulates the PI3 kinase/PI3K activity associated with endosomal membranes.

Its subcellular location is the early endosome membrane. The protein resides in the late endosome membrane. In terms of biological role, functions as a negative regulator of the PI3 kinase/PI3K activity associated with endosomal membranes via BECN1, a core subunit of the PI3K complex. By modifying the phosphatidylinositol 3-phosphate/PtdInsP3 content of endosomal membranes may regulate endosome fusion, recycling, sorting and early to late endosome transport. It is for instance, required for the delivery of cargos like BST2/tetherin from early to late endosome and thereby participates indirectly to their degradation by the lysosome. May play a role in meiosis. This is WD repeat-containing protein 91 from Mus musculus (Mouse).